The primary structure comprises 336 residues: Glycerol-3-phosphate dehydrogenase [NAD(P)+] (336 aa).

Residues Ser14, Trp15, Arg35, Arg36, and Lys109 each coordinate NADPH. Sn-glycerol 3-phosphate-binding residues include Lys109 and Gly139. Residue Ala143 coordinates NADPH. The sn-glycerol 3-phosphate site is built by Lys194, Asp247, Ser257, Arg258, and Asn259. Lys194 acts as the Proton acceptor in catalysis. Arg258 is an NADPH binding site. Glu284 provides a ligand contact to NADPH.

The protein belongs to the NAD-dependent glycerol-3-phosphate dehydrogenase family.

It localises to the cytoplasm. It carries out the reaction sn-glycerol 3-phosphate + NAD(+) = dihydroxyacetone phosphate + NADH + H(+). The catalysed reaction is sn-glycerol 3-phosphate + NADP(+) = dihydroxyacetone phosphate + NADPH + H(+). It functions in the pathway membrane lipid metabolism; glycerophospholipid metabolism. Functionally, catalyzes the reduction of the glycolytic intermediate dihydroxyacetone phosphate (DHAP) to sn-glycerol 3-phosphate (G3P), the key precursor for phospholipid synthesis. The polypeptide is Glycerol-3-phosphate dehydrogenase [NAD(P)+] (Streptomyces coelicolor (strain ATCC BAA-471 / A3(2) / M145)).